Reading from the N-terminus, the 171-residue chain is Large ribosomal subunit protein bL17 (171 aa).

Residues 140–152 are compositionally biased toward basic and acidic residues; sequence KREIQTKAREEKR. Residues 140–171 are disordered; it reads KREIQTKAREEKRATRKSNSAPVNKETTSKKK. The segment covering 156-165 has biased composition (polar residues); the sequence is KSNSAPVNKE.

This sequence belongs to the bacterial ribosomal protein bL17 family. Part of the 50S ribosomal subunit. Contacts protein L32.

The polypeptide is Large ribosomal subunit protein bL17 (Leptospira interrogans serogroup Icterohaemorrhagiae serovar Lai (strain 56601)).